The primary structure comprises 152 residues: Superoxide dismutase [Cu-Zn] 1 (152 aa).

Positions 45, 47, and 62 each coordinate Cu cation. Residues Cys-56 and Cys-145 are joined by a disulfide bond. Zn(2+)-binding residues include His-62, His-70, His-79, and Asp-82. His-119 provides a ligand contact to Cu cation.

The protein belongs to the Cu-Zn superoxide dismutase family. Homodimer. Cu cation serves as cofactor. The cofactor is Zn(2+).

It is found in the cytoplasm. The catalysed reaction is 2 superoxide + 2 H(+) = H2O2 + O2. Its function is as follows. Destroys radicals which are normally produced within the cells and which are toxic to biological systems. This Mesembryanthemum crystallinum (Common ice plant) protein is Superoxide dismutase [Cu-Zn] 1 (SODCC.1).